Here is a 51-residue protein sequence, read N- to C-terminus: Large ribosomal subunit protein eL39 (51 aa).

Residues 1 to 19 show a composition bias toward basic residues; that stretch reads MSHNMKGQKKRLAKAHKQN. Positions 1–23 are disordered; that stretch reads MSHNMKGQKKRLAKAHKQNSRVP.

Belongs to the eukaryotic ribosomal protein eL39 family.

This is Large ribosomal subunit protein eL39 from Methanosarcina mazei (strain ATCC BAA-159 / DSM 3647 / Goe1 / Go1 / JCM 11833 / OCM 88) (Methanosarcina frisia).